A 397-amino-acid polypeptide reads, in one-letter code: Phosphoglycerate kinase (397 aa).

Substrate is bound by residues 23–25, R38, 61–64, R119, and R152; these read DLN and HLGR. Residues K202, E324, and 354–357 each bind ATP; that span reads GGDT.

It belongs to the phosphoglycerate kinase family. Monomer.

The protein localises to the cytoplasm. The enzyme catalyses (2R)-3-phosphoglycerate + ATP = (2R)-3-phospho-glyceroyl phosphate + ADP. The protein operates within carbohydrate degradation; glycolysis; pyruvate from D-glyceraldehyde 3-phosphate: step 2/5. This chain is Phosphoglycerate kinase (pgk), found in Xanthobacter flavus.